The following is a 122-amino-acid chain: Large ribosomal subunit protein uL14c (122 aa).

This sequence belongs to the universal ribosomal protein uL14 family. As to quaternary structure, part of the 50S ribosomal subunit.

It localises to the plastid. In terms of biological role, binds to 23S rRNA. The protein is Large ribosomal subunit protein uL14c of Cuscuta gronovii (Common dodder).